The sequence spans 479 residues: Glutamyl-tRNA(Gln) amidotransferase subunit A (479 aa).

Residues K71 and S146 each act as charge relay system in the active site. S170 functions as the Acyl-ester intermediate in the catalytic mechanism.

Belongs to the amidase family. GatA subfamily. Heterotrimer of A, B and C subunits.

It catalyses the reaction L-glutamyl-tRNA(Gln) + L-glutamine + ATP + H2O = L-glutaminyl-tRNA(Gln) + L-glutamate + ADP + phosphate + H(+). Its function is as follows. Allows the formation of correctly charged Gln-tRNA(Gln) through the transamidation of misacylated Glu-tRNA(Gln) in organisms which lack glutaminyl-tRNA synthetase. The reaction takes place in the presence of glutamine and ATP through an activated gamma-phospho-Glu-tRNA(Gln). This is Glutamyl-tRNA(Gln) amidotransferase subunit A from Lactobacillus johnsonii (strain CNCM I-12250 / La1 / NCC 533).